Reading from the N-terminus, the 456-residue chain is Antigen Lp49 (456 aa).

The first 34 residues, 1–34, serve as a signal peptide directing secretion; it reads MNSNPKKKFLKLIKIKSDIILLIPIFLFLVCCKS. Residues Cys-346 and Cys-347 are joined by a disulfide bond.

Its subcellular location is the cell outer membrane. May be involved in virulence. Binds human plasminogen (PLG) and stimulates its proteolytic cleavage to enzymatically active plasmin in the presence of an urokinase-type PLG activator in vitro. Activated plasmin has proteolytic activity which may help the bacteria to spread throughout the host by degrading extracellular matrix components, facilitating tissue penetration and invasion. The polypeptide is Antigen Lp49 (Leptospira interrogans serogroup Icterohaemorrhagiae serovar copenhageni (strain Fiocruz L1-130)).